The following is a 144-amino-acid chain: 3-hydroxyacyl-[acyl-carrier-protein] dehydratase FabZ (144 aa).

The active site involves His51.

The protein belongs to the thioester dehydratase family. FabZ subfamily.

Its subcellular location is the cytoplasm. The enzyme catalyses a (3R)-hydroxyacyl-[ACP] = a (2E)-enoyl-[ACP] + H2O. In terms of biological role, involved in unsaturated fatty acids biosynthesis. Catalyzes the dehydration of short chain beta-hydroxyacyl-ACPs and long chain saturated and unsaturated beta-hydroxyacyl-ACPs. The sequence is that of 3-hydroxyacyl-[acyl-carrier-protein] dehydratase FabZ from Clostridium botulinum (strain 657 / Type Ba4).